Consider the following 204-residue polypeptide: Large ribosomal subunit protein bL25 (204 aa).

Belongs to the bacterial ribosomal protein bL25 family. CTC subfamily. In terms of assembly, part of the 50S ribosomal subunit; part of the 5S rRNA/L5/L18/L25 subcomplex. Contacts the 5S rRNA. Binds to the 5S rRNA independently of L5 and L18.

In terms of biological role, this is one of the proteins that binds to the 5S RNA in the ribosome where it forms part of the central protuberance. The polypeptide is Large ribosomal subunit protein bL25 (Pseudomonas aeruginosa (strain LESB58)).